The sequence spans 362 residues: DNA polymerase IV (362 aa).

The region spanning 6–187 (IIHVDMDAFY…LPVSSFHGVG (182 aa)) is the UmuC domain. Positions 10 and 105 each coordinate Mg(2+). Residue E106 is part of the active site.

This sequence belongs to the DNA polymerase type-Y family. In terms of assembly, monomer. The cofactor is Mg(2+).

The protein localises to the cytoplasm. The catalysed reaction is DNA(n) + a 2'-deoxyribonucleoside 5'-triphosphate = DNA(n+1) + diphosphate. In terms of biological role, poorly processive, error-prone DNA polymerase involved in untargeted mutagenesis. Copies undamaged DNA at stalled replication forks, which arise in vivo from mismatched or misaligned primer ends. These misaligned primers can be extended by PolIV. Exhibits no 3'-5' exonuclease (proofreading) activity. May be involved in translesional synthesis, in conjunction with the beta clamp from PolIII. This is DNA polymerase IV from Leptospira interrogans serogroup Icterohaemorrhagiae serovar copenhageni (strain Fiocruz L1-130).